A 924-amino-acid polypeptide reads, in one-letter code: Protein SMAX1-LIKE 2 (924 aa).

Positions 8 to 181 (IQQTLTPEAA…SAIEQSLIGN (174 aa)) constitute a Clp R domain. Residues 12–83 (LTPEAATVLN…LCFSVALERL (72 aa)) form a repeat 1 region. Residues 86 to 105 (TSTTTTTTSSSSSSSPSQTQ) show a composition bias toward low complexity. Residues 86–107 (TSTTTTTTSSSSSSSPSQTQEP) form a disordered region. A repeat 2 region spans residues 109–181 (LSNALTAALK…SAIEQSLIGN (73 aa)). The disordered stretch occupies residues 522-552 (TRSDITPPGSPVGTDLVLGRPNRGLSSPEKK). Residues 780 to 784 (FDLNE) carry the EAR motif.

It belongs to the ClpA/ClpB family. As to quaternary structure, interacts probably with TPL/TPR in an EAR-motif dependent manner. In terms of tissue distribution, expressed in seedlings and leaves. Detected in roots and axillary branches.

Functionally, probable component of a transcriptional corepressor complex that acts specifically in the karrikin pathway. Controls seedling growth redundantly with SMAX1, but is not involved in leaf morphology, shoot branching or germination control. The protein is Protein SMAX1-LIKE 2 of Arabidopsis thaliana (Mouse-ear cress).